The chain runs to 368 residues: Putative potassium channel KAT5 (368 aa).

The next 3 helical transmembrane spans lie at 33–53, 97–117, and 132–152; these read WWHM…PFEL, LLNL…ARVE, and LLCV…WMVF. An intramembrane region (pore-forming) is located at residues 180–199; it reads CAVYWSITTLATVGYGDLHA. A helical membrane pass occupies residues 206-226; that stretch reads LFSIAFMLFNMGLTSYIIGNI. 225–344 is a binding site for a nucleoside 3',5'-cyclic phosphate; sequence NITNLVVRET…CIVFSNFILV (120 aa).

Belongs to the potassium channel family. Plant (TC 1.A.1.4) subfamily.

It is found in the membrane. Its function is as follows. Putative inward-rectifying potassium channel. The sequence is that of Putative potassium channel KAT5 from Oryza sativa subsp. japonica (Rice).